The primary structure comprises 386 residues: MLKYASIALALATLGVAQQQQWGQCGGIGWTGATTCVAGSVCSVLNPYYSQCIPGAATVTSSSAPSTPTPPAGALPRLGGVNTAGYDFSVATDGSFTGTGVSPPVSQFSHFSSQGANLYRIPFAWQLMTPTLGGTISQSFLSRYDQTVQAALNSGPNVFVIIDLHNYARWNGGIIAQGGPTDAQFQSIWTQLAQKYGSNQRVIFGIMNEPHDIPSISTWVNSVQGAVNAIRAAGATNYLLLPGSSWSSAQAFPTEAGPLLVKVTDPLGGTSKLIFDVHKYLDSDNSGTHPDCTTDNVQVLQTLVQFLQANGNRQAILSETGGGNTSSCESLLANELAYVKSAYPTLAGFSVWAAGAFDTTYVLTVTPNADGSDQPLWVDAVKPNLP.

The N-terminal stretch at 1-17 (MLKYASIALALATLGVA) is a signal peptide. The region spanning 18-53 (QQQQWGQCGGIGWTGATTCVAGSVCSVLNPYYSQCI) is the CBM1 domain. The active-site Proton donor is Glu209. The Nucleophile role is filled by Glu319. Asn324 carries an N-linked (GlcNAc...) asparagine glycan.

Belongs to the glycosyl hydrolase 5 (cellulase A) family. Mn(2+) serves as cofactor.

It localises to the secreted. The catalysed reaction is Endohydrolysis of (1-&gt;4)-beta-D-glucosidic linkages in cellulose, lichenin and cereal beta-D-glucans.. In terms of biological role, secreted manganese dependent endoglucanase that acts by cleaving the beta-1,4-glucose linkage. Exhibits high activity toward carboxymethyl-cellulose (CMC), barley glucan, and glucomannan. Displays low activity on larminarin and xyloglucan but does not hydrolyze hemicellulose substrates such as birchwood xylan, arabinoxylan, and arabinan. This chain is Manganese dependent endoglucanase Eg5A, found in Phanerodontia chrysosporium (White-rot fungus).